The sequence spans 448 residues: Glucose-6-phosphate isomerase (448 aa).

Residue E290 is the Proton donor of the active site. Catalysis depends on residues H311 and K425.

The protein belongs to the GPI family.

Its subcellular location is the cytoplasm. The catalysed reaction is alpha-D-glucose 6-phosphate = beta-D-fructose 6-phosphate. It functions in the pathway carbohydrate biosynthesis; gluconeogenesis. The protein operates within carbohydrate degradation; glycolysis; D-glyceraldehyde 3-phosphate and glycerone phosphate from D-glucose: step 2/4. Catalyzes the reversible isomerization of glucose-6-phosphate to fructose-6-phosphate. The chain is Glucose-6-phosphate isomerase from Lactococcus lactis subsp. cremoris (strain SK11).